Here is a 296-residue protein sequence, read N- to C-terminus: Transcription factor Pur-alpha 1 (296 aa).

Methionine 1 carries the N-acetylmethionine modification. Disordered regions lie at residues methionine 1–glycine 25 and isoleucine 186–glycine 214. A Phosphoserine modification is found at serine 207.

It belongs to the PUR DNA-binding protein family. In terms of assembly, homodimer. Interacts with TCP20.

The protein localises to the nucleus. Transcription factor that specifically binds the purine-rich double-stranded telomeric repeated sequence 5'-AAACCCTAA-3' found in promoter telo boxes. The protein is Transcription factor Pur-alpha 1 (PURA1) of Arabidopsis thaliana (Mouse-ear cress).